An 86-amino-acid chain; its full sequence is Small ribosomal subunit protein bS20 (86 aa).

The segment at 1-23 (MANIKSSKKDSIKSRKKKKLNAS) is disordered.

It belongs to the bacterial ribosomal protein bS20 family.

Binds directly to 16S ribosomal RNA. In Buchnera aphidicola subsp. Baizongia pistaciae (strain Bp), this protein is Small ribosomal subunit protein bS20.